The following is a 569-amino-acid chain: Cysteine--tRNA ligase CPS1 homolog, chloroplastic/mitochondrial (569 aa).

The N-terminal 42 residues, 1 to 42, are a transit peptide targeting the chloroplast and mitochondrion; it reads MAAARRAAGLLPLLLSSPSRARLPHRQALALTPPLLRPHRLY. A Zn(2+)-binding site is contributed by C99. A 'HIGH' region motif is present at residues 101–111; sequence VTPYDDSHIGH. C279, H304, and E308 together coordinate Zn(2+). The short motif at 336 to 340 is the 'KMSKS' region element; it reads KMSKS. Residue K339 coordinates ATP.

The protein belongs to the class-I aminoacyl-tRNA synthetase family. Zn(2+) serves as cofactor.

The protein resides in the plastid. Its subcellular location is the chloroplast. It is found in the mitochondrion. It carries out the reaction tRNA(Cys) + L-cysteine + ATP = L-cysteinyl-tRNA(Cys) + AMP + diphosphate. In terms of biological role, nuclear genome-encoded factor required for normal assembly of chloroplast polysomes. This is Cysteine--tRNA ligase CPS1 homolog, chloroplastic/mitochondrial from Oryza sativa subsp. japonica (Rice).